The following is a 293-amino-acid chain: Formamidopyrimidine-DNA glycosylase (293 aa).

Pro2 functions as the Schiff-base intermediate with DNA in the catalytic mechanism. Glu3 (proton donor) is an active-site residue. The Proton donor; for beta-elimination activity role is filled by Lys58. Positions 104, 127, and 170 each coordinate DNA. The segment at 257 to 293 (SVYGREGKPCRNPACGGTVERVVQSGRSTFFCASCQT) adopts an FPG-type zinc-finger fold. Arg283 functions as the Proton donor; for delta-elimination activity in the catalytic mechanism.

It belongs to the FPG family. Monomer. Requires Zn(2+) as cofactor.

It catalyses the reaction Hydrolysis of DNA containing ring-opened 7-methylguanine residues, releasing 2,6-diamino-4-hydroxy-5-(N-methyl)formamidopyrimidine.. The enzyme catalyses 2'-deoxyribonucleotide-(2'-deoxyribose 5'-phosphate)-2'-deoxyribonucleotide-DNA = a 3'-end 2'-deoxyribonucleotide-(2,3-dehydro-2,3-deoxyribose 5'-phosphate)-DNA + a 5'-end 5'-phospho-2'-deoxyribonucleoside-DNA + H(+). Its function is as follows. Involved in base excision repair of DNA damaged by oxidation or by mutagenic agents. Acts as a DNA glycosylase that recognizes and removes damaged bases. Has a preference for oxidized purines, such as 7,8-dihydro-8-oxoguanine (8-oxoG). Has AP (apurinic/apyrimidinic) lyase activity and introduces nicks in the DNA strand. Cleaves the DNA backbone by beta-delta elimination to generate a single-strand break at the site of the removed base with both 3'- and 5'-phosphates. The protein is Formamidopyrimidine-DNA glycosylase of Brucella melitensis biotype 1 (strain ATCC 23456 / CCUG 17765 / NCTC 10094 / 16M).